The sequence spans 526 residues: Light-independent protochlorophyllide reductase subunit B (526 aa).

Asp-36 contacts [4Fe-4S] cluster. Residue Asp-290 is the Proton donor of the active site. 425–426 (GL) provides a ligand contact to substrate.

Belongs to the ChlB/BchB/BchZ family. Protochlorophyllide reductase is composed of three subunits; ChlL, ChlN and ChlB. Forms a heterotetramer of two ChlB and two ChlN subunits. [4Fe-4S] cluster is required as a cofactor.

The enzyme catalyses chlorophyllide a + oxidized 2[4Fe-4S]-[ferredoxin] + 2 ADP + 2 phosphate = protochlorophyllide a + reduced 2[4Fe-4S]-[ferredoxin] + 2 ATP + 2 H2O. It participates in porphyrin-containing compound metabolism; chlorophyll biosynthesis (light-independent). Its function is as follows. Component of the dark-operative protochlorophyllide reductase (DPOR) that uses Mg-ATP and reduced ferredoxin to reduce ring D of protochlorophyllide (Pchlide) to form chlorophyllide a (Chlide). This reaction is light-independent. The NB-protein (ChlN-ChlB) is the catalytic component of the complex. The protein is Light-independent protochlorophyllide reductase subunit B of Prochlorococcus marinus (strain MIT 9515).